The sequence spans 971 residues: Protein ALWAYS EARLY 1 (971 aa).

Over residues 1-11 the composition is skewed to basic residues; it reads MAPTRKSKSVN. Disordered regions lie at residues 1–40, 117–137, 197–260, 326–371, and 421–507; these read MAPTRKSKSVNKRFTNEASPDINFGSASKTKQRKKKLADK, SESEGEDHDASEVTRKHLKRK, IEDF…MFEN, GLLE…GLED, and PKES…KISL. Residues 40–98 form the SANT domain; that stretch reads KLGPQWTKRELVRFYDAYRKYVGDWKKVAAAVRNNRSVEMVETLFCMNRAYLSLPEGTA. 3 stretches are compositionally biased toward basic and acidic residues: residues 209–219, 332–350, and 424–440; these read KQLDADDDASR, SSPHWEEERKTNNVDKKSN, and STQDKSLYTKESAEVDS. Over residues 450–470 the composition is skewed to polar residues; that stretch reads SSQGPAKQLKTAKTTVESSSA.

In terms of tissue distribution, expressed ubiquitously in vegetative and reproductive tissues.

It localises to the nucleus. The protein is Protein ALWAYS EARLY 1 (ALY1) of Arabidopsis thaliana (Mouse-ear cress).